The sequence spans 195 residues: MATGPTYRVKFRRRREAKTDYRKRLKLLLSRKPRLVARRTLNHCIAQIVLYDEKGDKTVVSAHSRELIKLGYKGHTGNLPSAYLTGYLLGKKALAKGYTEAVLDIGLHRATKGNAIFAILKGALDAGMEIPHGEEILPSEERIRGEHIKAYAEMLKEQDEERYKKQFSKYLEKGLEPEKLPEHFEEIKAKIDSMF.

The protein belongs to the universal ribosomal protein uL18 family. In terms of assembly, part of the 50S ribosomal subunit. Contacts the 5S and 23S rRNAs.

In terms of biological role, this is one of the proteins that bind and probably mediate the attachment of the 5S RNA into the large ribosomal subunit, where it forms part of the central protuberance. In Methanocaldococcus jannaschii (strain ATCC 43067 / DSM 2661 / JAL-1 / JCM 10045 / NBRC 100440) (Methanococcus jannaschii), this protein is Large ribosomal subunit protein uL18.